Here is a 117-residue protein sequence, read N- to C-terminus: MGFWKFPPFLVLSILVLYQAGMFHTAPVRLPLESSFDSATLTEEEVSLLLVAMVKDYVQMKATVLEQESEDFSITAQEKSCNTASCVTHKMTGWLSRSGSVAKNNFMPTNVDSKILG.

The N-terminal stretch at 1-25 is a signal peptide; sequence MGFWKFPPFLVLSILVLYQAGMFHT. Residues 26 to 79 constitute a propeptide that is removed on maturation; that stretch reads APVRLPLESSFDSATLTEEEVSLLLVAMVKDYVQMKATVLEQESEDFSITAQEK. A disulfide bridge connects residues C81 and C86.

It belongs to the calcitonin family. In terms of tissue distribution, mainly expressed in the thyroid gland and CNS. Found in the nerve cells of the cerebrum, hippocampus, hypothalamus, pons/midbrain and thalamus. Also detected in the glia-like cells of pons/midbrain and in meninx of tactus opticus.

The protein resides in the secreted. The sequence is that of Calcitonin receptor-stimulating peptide 2 (CRSP2) from Sus scrofa (Pig).